Consider the following 145-residue polypeptide: 3-hydroxyacyl-[acyl-carrier-protein] dehydratase FabZ (145 aa).

The active site involves histidine 49.

This sequence belongs to the thioester dehydratase family. FabZ subfamily.

The protein resides in the cytoplasm. The enzyme catalyses a (3R)-hydroxyacyl-[ACP] = a (2E)-enoyl-[ACP] + H2O. In terms of biological role, involved in unsaturated fatty acids biosynthesis. Catalyzes the dehydration of short chain beta-hydroxyacyl-ACPs and long chain saturated and unsaturated beta-hydroxyacyl-ACPs. This is 3-hydroxyacyl-[acyl-carrier-protein] dehydratase FabZ from Rickettsia bellii (strain RML369-C).